The sequence spans 214 residues: Phosphatidylcholine transfer protein (214 aa).

Met1 is subject to N-acetylmethionine. Residues Met1–Lys212 enclose the START domain. Residues Tyr72 and Arg78 each coordinate a 1,2-diacyl-sn-glycero-3-phosphocholine. Ser139 is subject to Phosphoserine. Residue Gln157 coordinates a 1,2-diacyl-sn-glycero-3-phosphocholine.

In terms of assembly, interacts with ACOT13/THEM2. As to expression, abundant in liver of pups but levels in liver decrease 10-fold about 2 weeks after birth. In adult, highly expressed in epididymis, testis, kidney and bone-marrow derived mast cells.

The protein resides in the cytoplasm. In terms of biological role, catalyzes the transfer of phosphatidylcholine between membranes. Binds a single lipid molecule. The sequence is that of Phosphatidylcholine transfer protein (Pctp) from Mus musculus (Mouse).